We begin with the raw amino-acid sequence, 865 residues long: MNNQGFVPASDYPTAVSYPTQGQSYNTQEEQPAYPQRFSTSQGMYAAEYGNANMMNTSENEPNNLAHSQPFRQSPSTQRNLPNQSFDFASNGAWNGSGSVKYSSPMMPSSRIPFQQEKEAAMQQQQQQQQQQQLYQRQMQSREALLSQQIPPNQIGINAHPAVRQTPQPAPSPNTPSGNANQLTPAYAASFDKFMVSLISFMEKRGTPIKSYPQINNTPINLMMLYALVMRAGGSRQVSAHNFWPKISASLGFPSPDAISLLIQYYNSYLLPYEEAWLAAQQQQKSLQQAKANHSANVQSRPKNYPQKPVQTTPEAVHANGSMHGSLHSKSPSPAFTANRFSPAAPTTVSSERNAPPYPSAPTRPTPPTVQTSSSAAPVDSAEPVAYQPIKKPIDPMLGYPLNVAATYRLDESLLRLQMPSIVDLGTVNIQALCMSLQSTLEKEITYAMNVLLILTNDQKWMFPLSECQDVVDALIDVATQCLDNLLSVLPNEDLMEIADKRPSYRQLLYNCCVEISQFSREDFSNSLSENKTKDSINAIDVHNSEQNLLAVFVIFRNLSHFEANQNVLVQNPDFFPLLIRVVKSLNFHATSLLRSSRNTLDLHKDVLIVLCQLSQNFILPNVDVARHVLLFILSFSPFNRKKSKTILNDTLPTSIPSYTPATHPYAGPAINAYAKLLAKDANNKTNFQAIFDNNPKFLDSLFLLLASVVPKFNRHCLKICERRLPLLQQSFFCLAATVSYVKQSEQAANWCNIGEGFFVSMLRLLILLSGHPSLNPPSRVASQYPTTNPFRYVIQSGISTVRRLLSLVEAGNISLSSFPKSETLLAVLLAPTTETSFLKEISNLLDRTGDSDASLENTDDKSGI.

Disordered stretches follow at residues 1 to 34 (MNNQ…QPAY), 54 to 92 (MMNT…ASNG), 116 to 143 (QEKE…QSRE), and 163 to 183 (VRQT…ANQL). A compositionally biased stretch (polar residues) spans 17-30 (SYPTQGQSYNTQEE). The span at 121-139 (AMQQQQQQQQQQQLYQRQM) shows a compositional bias: low complexity. The 91-residue stretch at 188–278 (AASFDKFMVS…YLLPYEEAWL (91 aa)) folds into the ARID domain. The interval 288 to 380 (QQAKANHSAN…QTSSSAAPVD (93 aa)) is disordered. Residues 328-353 (HSKSPSPAFTANRFSPAAPTTVSSER) show a composition bias toward polar residues. Positions 356-368 (PPYPSAPTRPTPP) are enriched in pro residues. S852 and S855 each carry phosphoserine.

This sequence belongs to the SWI1 family. As to quaternary structure, component of the SWI/SNF global transcription activator complex composed of at least arp9, arp42, snf5, snf22, snf30, sbf59, sol1, ssr1, ssr2, ssr3, ssr4 and tfg3.

The protein resides in the nucleus. Component of the SWI/SNF complex, an ATP-dependent chromatin remodeling complex, required for the positive and negative regulation of gene expression of a large number of genes. It changes chromatin structure by altering DNA-histone contacts within a nucleosome, leading eventually to a change in nucleosome position, thus facilitating or repressing binding of gene-specific transcription factors. The sequence is that of SWI/SNF chromatin-remodeling complex subunit sol1 (sol1) from Schizosaccharomyces pombe (strain 972 / ATCC 24843) (Fission yeast).